A 1061-amino-acid polypeptide reads, in one-letter code: Isoleucine--tRNA ligase (1061 aa).

The short motif at 50-60 (PYTSGSAHMGT) is the 'HIGH' region element. The short motif at 604-608 (KMSKS) is the 'KMSKS' region element. Lys-607 contributes to the ATP binding site.

Belongs to the class-I aminoacyl-tRNA synthetase family. IleS type 2 subfamily. Monomer. Zn(2+) is required as a cofactor.

It localises to the cytoplasm. The catalysed reaction is tRNA(Ile) + L-isoleucine + ATP = L-isoleucyl-tRNA(Ile) + AMP + diphosphate. Its function is as follows. Catalyzes the attachment of isoleucine to tRNA(Ile). As IleRS can inadvertently accommodate and process structurally similar amino acids such as valine, to avoid such errors it has two additional distinct tRNA(Ile)-dependent editing activities. One activity is designated as 'pretransfer' editing and involves the hydrolysis of activated Val-AMP. The other activity is designated 'posttransfer' editing and involves deacylation of mischarged Val-tRNA(Ile). In Natronomonas pharaonis (strain ATCC 35678 / DSM 2160 / CIP 103997 / JCM 8858 / NBRC 14720 / NCIMB 2260 / Gabara) (Halobacterium pharaonis), this protein is Isoleucine--tRNA ligase.